The following is a 343-amino-acid chain: Coiled-coil domain-containing protein 97 (343 aa).

Met-1 bears the N-acetylmethionine mark. Residues 1 to 37 (MEAVATATAAKEPDKGCIEPGPGHWGELSRTPVPSKP) form a disordered region. Thr-47 carries the phosphothreonine modification. 3 disordered regions span residues 200–220 (ARTP…ACPL), 234–277 (QQRL…DSEE), and 292–343 (RFLD…LDGD). Positions 224 to 262 (LLQSYEERELQQRLLQQQEEEEACLEEEEEEEDSDEEDQ) form a coiled coil. The span at 241–261 (QEEEEACLEEEEEEEDSDEED) shows a compositional bias: acidic residues. Residues 262–277 (QRSGKDSEAWVPDSEE) show a composition bias toward basic and acidic residues. A phosphoserine mark is found at Ser-275 and Ser-337. Residues 324–343 (ERYFDEEEPEDAPSPELDGD) show a composition bias toward acidic residues.

As to quaternary structure, associates with splicing factor SF3B complex, involved in branch-site recognition.

It localises to the nucleus. In terms of biological role, may play a role pre-mRNA splicing through the association with the splicing factor SF3B complex which is involved in branch-site recognition. This Homo sapiens (Human) protein is Coiled-coil domain-containing protein 97 (CCDC97).